Here is a 583-residue protein sequence, read N- to C-terminus: L-galactono-1,4-lactone dehydrogenase 1, mitochondrial (583 aa).

Residues 1 to 36 (MRRLLLAGILRRASSSPSSHHHLHLVRALSASSPLP) constitute a mitochondrion transit peptide. Residues 37-78 (ASDADLRKYAGYALLLLGCGAATYYSFPLPPDALHKKAVPFK) constitute a propeptide, removed in mature form. Residues 45–61 (YAGYALLLLGCGAATYY) form a helical membrane-spanning segment. In terms of domain architecture, FAD-binding PCMH-type spans 95-266 (THEVHTRVLL…AEVTLQCVER (172 aa)).

Requires FAD as cofactor.

The protein resides in the mitochondrion membrane. The enzyme catalyses L-galactono-1,4-lactone + 4 Fe(III)-[cytochrome c] = L-dehydroascorbate + 4 Fe(II)-[cytochrome c] + 5 H(+). The protein operates within cofactor biosynthesis; L-ascorbate biosynthesis. In terms of biological role, involved in the biosynthesis of ascorbic acid. The sequence is that of L-galactono-1,4-lactone dehydrogenase 1, mitochondrial (GLDH1) from Oryza sativa subsp. japonica (Rice).